The primary structure comprises 37 residues: Large ribosomal subunit protein bL36 (37 aa).

The protein belongs to the bacterial ribosomal protein bL36 family.

This Shewanella frigidimarina (strain NCIMB 400) protein is Large ribosomal subunit protein bL36.